The following is a 313-amino-acid chain: UPF0761 membrane protein VS_0126 (313 aa).

A run of 6 helical transmembrane segments spans residues 41–61, 104–124, 139–159, 185–205, 217–237, and 249–269; these read YLAYITLLSIVPMLTVLLSIL, MTAVGSVFLFIAALMLISNID, AVLSFSMYWMVLTLGPILIGA, VIRKLPLITSFFAFFGLYLLV, AGSLVAALLFELSKKGFAAYI, and ALAAIPILFVWVYLCWLIVLV. The segment covering 281–290 has biased composition (polar residues); the sequence is EQWSDSQEMV. The interval 281–313 is disordered; that stretch reads EQWSDSQEMVHSSDKDKITEQGNNSDSTDPESK.

It belongs to the UPF0761 family.

The protein localises to the cell inner membrane. This chain is UPF0761 membrane protein VS_0126, found in Vibrio atlanticus (strain LGP32) (Vibrio splendidus (strain Mel32)).